Consider the following 336-residue polypeptide: Palmitoyltransferase PFA3 (336 aa).

The Cytoplasmic segment spans residues 1–6; sequence MNDRLS. Residues 7 to 29 form a helical membrane-spanning segment; the sequence is LTSLFPRCLTTCLYIWTAYITLT. At 30 to 37 the chain is on the vacuolar side; it reads RIHQIPRW. Residues 38-58 form a helical membrane-spanning segment; the sequence is FLALTIVPTLAVALYTYYKVI. Residues 59–147 lie on the Cytoplasmic side of the membrane; it reads ARGPGSPLDF…AECTGFRNQK (89 aa). In terms of domain architecture, DHHC spans 104-154; the sequence is RVCQVCHVWKPDRCHHCSSCDVCILKMDHHCPWFAECTGFRNQKFFIQFLM. The helical transmembrane segment at 148-168 threads the bilayer; the sequence is FFIQFLMYTTLYAFLVLIYTC. Residues 169-188 lie on the Vacuolar side of the membrane; the sequence is YELGTWFNSGSFNRELIDFH. Residues 189–209 traverse the membrane as a helical segment; sequence LLGVALLAVAVFISVLAFTCF. Topologically, residues 210–336 are cytoplasmic; that stretch reads SIYQVCKNQT…RASVEIIDAN (127 aa).

The protein belongs to the DHHC palmitoyltransferase family. PFA3 subfamily. Post-translationally, autopalmitoylated.

It localises to the vacuole membrane. The catalysed reaction is L-cysteinyl-[protein] + hexadecanoyl-CoA = S-hexadecanoyl-L-cysteinyl-[protein] + CoA. Palmitoyltransferase specific for VAC8. Palmitoylates VAC8 at one or more of its N-terminal cysteine residues, which is required for its proper membrane localization. The sequence is that of Palmitoyltransferase PFA3 (PFA3) from Saccharomyces cerevisiae (strain ATCC 204508 / S288c) (Baker's yeast).